A 264-amino-acid polypeptide reads, in one-letter code: Thymidylate synthase (264 aa).

Residue R21 participates in dUMP binding. (6R)-5,10-methylene-5,6,7,8-tetrahydrofolate is bound at residue H51. 126–127 serves as a coordination point for dUMP; it reads RR. Residue C146 is the Nucleophile of the active site. DUMP is bound by residues 166–169, N177, and 207–209; these read RSCD and HLY. D169 is a binding site for (6R)-5,10-methylene-5,6,7,8-tetrahydrofolate. A (6R)-5,10-methylene-5,6,7,8-tetrahydrofolate-binding site is contributed by A263.

Belongs to the thymidylate synthase family. Bacterial-type ThyA subfamily. Homodimer.

Its subcellular location is the cytoplasm. It catalyses the reaction dUMP + (6R)-5,10-methylene-5,6,7,8-tetrahydrofolate = 7,8-dihydrofolate + dTMP. It participates in pyrimidine metabolism; dTTP biosynthesis. Catalyzes the reductive methylation of 2'-deoxyuridine-5'-monophosphate (dUMP) to 2'-deoxythymidine-5'-monophosphate (dTMP) while utilizing 5,10-methylenetetrahydrofolate (mTHF) as the methyl donor and reductant in the reaction, yielding dihydrofolate (DHF) as a by-product. This enzymatic reaction provides an intracellular de novo source of dTMP, an essential precursor for DNA biosynthesis. The polypeptide is Thymidylate synthase (Hamiltonella defensa subsp. Acyrthosiphon pisum (strain 5AT)).